Reading from the N-terminus, the 403-residue chain is Flavohemoprotein (403 aa).

Residues Met1–Ser138 enclose the Globin domain. His85 serves as a coordination point for heme b. Residues Tyr95 and Glu137 each act as charge relay system in the active site. The interval Gly149–Glu403 is reductase. The region spanning Lys152–Asp262 is the FAD-binding FR-type domain. Residues Tyr190 and Arg206–Ser209 contribute to the FAD site. Gly275 to Pro280 contacts NADP(+). Val395–Pro398 contributes to the FAD binding site.

The protein belongs to the globin family. Two-domain flavohemoproteins subfamily. This sequence in the C-terminal section; belongs to the flavoprotein pyridine nucleotide cytochrome reductase family. Monomer. FAD serves as cofactor. The cofactor is heme b.

The protein resides in the cytoplasm. It catalyses the reaction 2 nitric oxide + NADPH + 2 O2 = 2 nitrate + NADP(+) + H(+). It carries out the reaction 2 nitric oxide + NADH + 2 O2 = 2 nitrate + NAD(+) + H(+). Functionally, is involved in NO detoxification in an aerobic process, termed nitric oxide dioxygenase (NOD) reaction that utilizes O(2) and NAD(P)H to convert NO to nitrate, which protects the bacterium from various noxious nitrogen compounds. Therefore, plays a central role in the inducible response to nitrosative stress. Its function is as follows. In the presence of oxygen and NADH, FHP has NADH oxidase activity, which leads to the generation of superoxide and H(2)O(2), both in vitro and in vivo, and it has been suggested that FHP might act as an amplifier of superoxide stress. Under anaerobic conditions, FHP also exhibits nitric oxide reductase and FAD reductase activities. However, all these reactions are much lower than NOD activity. This chain is Flavohemoprotein (hmp), found in Cupriavidus necator (strain ATCC 17699 / DSM 428 / KCTC 22496 / NCIMB 10442 / H16 / Stanier 337) (Ralstonia eutropha).